A 423-amino-acid chain; its full sequence is Lipase member M (423 aa).

The N-terminal stretch at methionine 1–serine 33 is a signal peptide. Asparagine 48 is a glycosylation site (N-linked (GlcNAc...) asparagine). In terms of domain architecture, AB hydrolase-1 spans proline 92–glycine 392. Serine 186 serves as the catalytic Nucleophile. Cysteine 260 and cysteine 269 are oxidised to a cystine. Residues aspartate 357 and histidine 386 each act as charge relay system in the active site.

The protein belongs to the AB hydrolase superfamily. Lipase family. Exclusively expressed in the epidermis within the granular keratinocytes.

The protein localises to the secreted. Functionally, plays a highly specific role in the last step of keratinocyte differentiation. May have an essential function in lipid metabolism of the most differentiated epidermal layers. The protein is Lipase member M (LIPM) of Homo sapiens (Human).